We begin with the raw amino-acid sequence, 204 residues long: Outer-membrane lipoprotein carrier protein (204 aa).

The first 21 residues, 1–21 (MKKLLVACCVVSGMMSASVLA), serve as a signal peptide directing secretion.

It belongs to the LolA family. As to quaternary structure, monomer.

It localises to the periplasm. Participates in the translocation of lipoproteins from the inner membrane to the outer membrane. Only forms a complex with a lipoprotein if the residue after the N-terminal Cys is not an aspartate (The Asp acts as a targeting signal to indicate that the lipoprotein should stay in the inner membrane). This chain is Outer-membrane lipoprotein carrier protein, found in Edwardsiella ictaluri (strain 93-146).